We begin with the raw amino-acid sequence, 592 residues long: Serine/threonine-protein kinase ksg1 (592 aa).

Residues 1–10 (MRNTHNPNET) show a composition bias toward polar residues. The tract at residues 1–92 (MRNTHNPNET…NPSSGASTPN (92 aa)) is disordered. Positions 11–22 (EASEDAENDTQS) are enriched in acidic residues. Positions 27–37 (SFDHGSSEKLN) are enriched in basic and acidic residues. A compositionally biased stretch (polar residues) spans 42-68 (PKTQNSAIPQSNALNTTPNESTSQIDS). Phosphoserine is present on residues Ser-64 and Ser-69. The segment covering 80 to 92 (STPNPSSGASTPN) has biased composition (polar residues). Positions 99-366 (FKFGEILGEG…VDEIHQHPFF (268 aa)) constitute a Protein kinase domain. ATP-binding positions include 109–111 (SYS) and Lys-128. The tract at residues 130–175 (LDKRHIIKEKKEKYVNIEKEALCILSKHPGFIKLFYTFQDAHNLYF) is PIF-pocket. Residues 178–180 (SLA) and Glu-184 each bind ATP. Asp-223 (proton acceptor) is an active-site residue. 2 residues coordinate ATP: Glu-227 and Asp-241. Positions 461–572 (ISKIGTLNVY…ELLDKASSIS (112 aa)) constitute a PH domain.

This sequence belongs to the protein kinase superfamily. AGC Ser/Thr protein kinase family. PDPK1 subfamily.

The protein localises to the cytoplasm. It catalyses the reaction L-seryl-[protein] + ATP = O-phospho-L-seryl-[protein] + ADP + H(+). The catalysed reaction is L-threonyl-[protein] + ATP = O-phospho-L-threonyl-[protein] + ADP + H(+). Involved in the control of sexual development and cell growth under stressed conditions. Phosphorylates AGC kinase gad8 at 'Thr-387', activating gad8 kinase activity and promoting sexual development. Phosphorylates AGC kinase psk1 at 'Ser-248', activating psk1 kinase activity and promoting phosphorylation of ribosomal protein S6. The sequence is that of Serine/threonine-protein kinase ksg1 from Schizosaccharomyces pombe (strain 972 / ATCC 24843) (Fission yeast).